Consider the following 430-residue polypeptide: Gamma-glutamyl phosphate reductase (430 aa).

The protein belongs to the gamma-glutamyl phosphate reductase family.

Its subcellular location is the cytoplasm. It catalyses the reaction L-glutamate 5-semialdehyde + phosphate + NADP(+) = L-glutamyl 5-phosphate + NADPH + H(+). It participates in amino-acid biosynthesis; L-proline biosynthesis; L-glutamate 5-semialdehyde from L-glutamate: step 2/2. Catalyzes the NADPH-dependent reduction of L-glutamate 5-phosphate into L-glutamate 5-semialdehyde and phosphate. The product spontaneously undergoes cyclization to form 1-pyrroline-5-carboxylate. The polypeptide is Gamma-glutamyl phosphate reductase (Rhodopseudomonas palustris (strain ATCC BAA-98 / CGA009)).